We begin with the raw amino-acid sequence, 83 residues long: Cytochrome b559 subunit alpha (83 aa).

A helical membrane pass occupies residues Val-21 to Trp-35. His-23 is a binding site for heme.

The protein belongs to the PsbE/PsbF family. In terms of assembly, heterodimer of an alpha subunit and a beta subunit. PSII is composed of 1 copy each of membrane proteins PsbA, PsbB, PsbC, PsbD, PsbE, PsbF, PsbH, PsbI, PsbJ, PsbK, PsbL, PsbM, PsbT, PsbX, PsbY, PsbZ, Psb30/Ycf12, at least 3 peripheral proteins of the oxygen-evolving complex and a large number of cofactors. It forms dimeric complexes. The cofactor is heme b.

The protein resides in the plastid. The protein localises to the chloroplast thylakoid membrane. This b-type cytochrome is tightly associated with the reaction center of photosystem II (PSII). PSII is a light-driven water:plastoquinone oxidoreductase that uses light energy to abstract electrons from H(2)O, generating O(2) and a proton gradient subsequently used for ATP formation. It consists of a core antenna complex that captures photons, and an electron transfer chain that converts photonic excitation into a charge separation. This Pinus koraiensis (Korean pine) protein is Cytochrome b559 subunit alpha.